A 247-amino-acid polypeptide reads, in one-letter code: Sec-independent protein translocase protein TatC (247 aa).

Helical transmembrane passes span 21-41 (IILLSFFLAFFVGLFVSKPLI), 71-91 (AFIIGLILVFPVILYQLWAFV), 109-129 (ITFLLFLCGVVFSYVITFPFI), 154-174 (FLLQIVLSFGVLFELPMVIML), and 195-215 (FCLLIIAAFIAPPEILSHLMI).

It belongs to the TatC family. As to quaternary structure, forms a complex with TatA.

The protein localises to the cell membrane. Its function is as follows. Part of the twin-arginine translocation (Tat) system that transports large folded proteins containing a characteristic twin-arginine motif in their signal peptide across membranes. This chain is Sec-independent protein translocase protein TatC, found in Listeria innocua serovar 6a (strain ATCC BAA-680 / CLIP 11262).